The following is a 240-amino-acid chain: Biosynthetic peptidoglycan transglycosylase (240 aa).

The helical transmembrane segment at 9-31 (FLNVVKWFAIASVLLVLLFRVVP) threads the bilayer.

It belongs to the glycosyltransferase 51 family.

It localises to the cell inner membrane. The enzyme catalyses [GlcNAc-(1-&gt;4)-Mur2Ac(oyl-L-Ala-gamma-D-Glu-L-Lys-D-Ala-D-Ala)](n)-di-trans,octa-cis-undecaprenyl diphosphate + beta-D-GlcNAc-(1-&gt;4)-Mur2Ac(oyl-L-Ala-gamma-D-Glu-L-Lys-D-Ala-D-Ala)-di-trans,octa-cis-undecaprenyl diphosphate = [GlcNAc-(1-&gt;4)-Mur2Ac(oyl-L-Ala-gamma-D-Glu-L-Lys-D-Ala-D-Ala)](n+1)-di-trans,octa-cis-undecaprenyl diphosphate + di-trans,octa-cis-undecaprenyl diphosphate + H(+). It participates in cell wall biogenesis; peptidoglycan biosynthesis. Its function is as follows. Peptidoglycan polymerase that catalyzes glycan chain elongation from lipid-linked precursors. This chain is Biosynthetic peptidoglycan transglycosylase, found in Pseudomonas fluorescens (strain SBW25).